The primary structure comprises 142 residues: uncharacterized protein (142 aa).

Positions 1–26 (MITEFIKSFLLFFFLPFFLSMPMIFA) are cleaved as a signal peptide.

This is an uncharacterized protein from Schizosaccharomyces pombe (strain 972 / ATCC 24843) (Fission yeast).